Consider the following 144-residue polypeptide: uncharacterized protein (144 aa).

Transmembrane regions (helical) follow at residues 16 to 36 (FLIFSKVAMLTFLTVGIGAIF), 48 to 68 (GFIVVAGIVSLIGMTIGALII), 87 to 107 (LLPEAYYICIELFGYGSLVLL), and 120 to 140 (VMSLLMAGLFILVVLVIWYFG).

The protein localises to the cell membrane. This is an uncharacterized protein from Methanocaldococcus jannaschii (strain ATCC 43067 / DSM 2661 / JAL-1 / JCM 10045 / NBRC 100440) (Methanococcus jannaschii).